Consider the following 382-residue polypeptide: Queuine tRNA-ribosyltransferase (382 aa).

Catalysis depends on D89, which acts as the Proton acceptor. Substrate is bound by residues 89–93, D143, Q187, and G214; that span reads DSGGF. The interval 245-251 is RNA binding; it reads GVGKPED. The active-site Nucleophile is the D264. Residues 269-273 form an RNA binding; important for wobble base 34 recognition region; the sequence is TRNAR. C302, C304, C307, and H333 together coordinate Zn(2+).

The protein belongs to the queuine tRNA-ribosyltransferase family. As to quaternary structure, homodimer. Within each dimer, one monomer is responsible for RNA recognition and catalysis, while the other monomer binds to the replacement base PreQ1. Zn(2+) is required as a cofactor.

The enzyme catalyses 7-aminomethyl-7-carbaguanine + guanosine(34) in tRNA = 7-aminomethyl-7-carbaguanosine(34) in tRNA + guanine. Its pathway is tRNA modification; tRNA-queuosine biosynthesis. In terms of biological role, catalyzes the base-exchange of a guanine (G) residue with the queuine precursor 7-aminomethyl-7-deazaguanine (PreQ1) at position 34 (anticodon wobble position) in tRNAs with GU(N) anticodons (tRNA-Asp, -Asn, -His and -Tyr). Catalysis occurs through a double-displacement mechanism. The nucleophile active site attacks the C1' of nucleotide 34 to detach the guanine base from the RNA, forming a covalent enzyme-RNA intermediate. The proton acceptor active site deprotonates the incoming PreQ1, allowing a nucleophilic attack on the C1' of the ribose to form the product. After dissociation, two additional enzymatic reactions on the tRNA convert PreQ1 to queuine (Q), resulting in the hypermodified nucleoside queuosine (7-(((4,5-cis-dihydroxy-2-cyclopenten-1-yl)amino)methyl)-7-deazaguanosine). This is Queuine tRNA-ribosyltransferase from Sodalis glossinidius (strain morsitans).